The following is a 263-amino-acid chain: Endonuclease 8 (263 aa).

The active-site Schiff-base intermediate with DNA is Pro2. The active-site Proton donor is Glu3. The active-site Proton donor; for beta-elimination activity is Lys53. DNA is bound by residues Gln70, Arg125, and Asn169. The FPG-type zinc-finger motif lies at 229–263 (KVFHRDGEACERCGGIIEKTTLSSRPFYWCPHCQK). Catalysis depends on Arg253, which acts as the Proton donor; for delta-elimination activity.

The protein belongs to the FPG family. Zn(2+) serves as cofactor.

It carries out the reaction 2'-deoxyribonucleotide-(2'-deoxyribose 5'-phosphate)-2'-deoxyribonucleotide-DNA = a 3'-end 2'-deoxyribonucleotide-(2,3-dehydro-2,3-deoxyribose 5'-phosphate)-DNA + a 5'-end 5'-phospho-2'-deoxyribonucleoside-DNA + H(+). Its function is as follows. Involved in base excision repair of DNA damaged by oxidation or by mutagenic agents. Acts as a DNA glycosylase that recognizes and removes damaged bases. Has a preference for oxidized pyrimidines, such as thymine glycol, 5,6-dihydrouracil and 5,6-dihydrothymine. Has AP (apurinic/apyrimidinic) lyase activity and introduces nicks in the DNA strand. Cleaves the DNA backbone by beta-delta elimination to generate a single-strand break at the site of the removed base with both 3'- and 5'-phosphates. The chain is Endonuclease 8 from Salmonella schwarzengrund (strain CVM19633).